A 116-amino-acid polypeptide reads, in one-letter code: Flagellar transcriptional regulator FlhD (116 aa).

This sequence belongs to the FlhD family. In terms of assembly, homodimer; disulfide-linked. Forms a heterohexamer composed of two FlhC and four FlhD subunits. Each FlhC binds a FlhD dimer, forming a heterotrimer, and a hexamer assembles by dimerization of two heterotrimers.

It localises to the cytoplasm. Functionally, functions in complex with FlhC as a master transcriptional regulator that regulates transcription of several flagellar and non-flagellar operons by binding to their promoter region. Activates expression of class 2 flagellar genes, including fliA, which is a flagellum-specific sigma factor that turns on the class 3 genes. Also regulates genes whose products function in a variety of physiological pathways. The chain is Flagellar transcriptional regulator FlhD from Yersinia pseudotuberculosis serotype O:1b (strain IP 31758).